A 139-amino-acid polypeptide reads, in one-letter code: UPF0251 protein Csac_0224 (139 aa).

It belongs to the UPF0251 family.

The polypeptide is UPF0251 protein Csac_0224 (Caldicellulosiruptor saccharolyticus (strain ATCC 43494 / DSM 8903 / Tp8T 6331)).